We begin with the raw amino-acid sequence, 540 residues long: MNNQSNHFTNPLLQLIKNVAETKNLAIDDVVLCLKTALAQTYKKHLNYVNVEVNIDFNKGLMQIEQLFDVVDDNNEDYDDFLEMPLSEAKKLNPNLEVGGVLRKPVSLKDIKGDLISKMVLLFNQKINETAFKTVMSDFINEVGQVIEARVEDIDTNKDGGLKGYIVNLETTKGYMPKRELSKGEKLDIGKKYLFVIKEIQKQSSMWPITLSRSDSRLLEFLLNSNTPEIANGTIEIKKMERSPGTKSKVAVISKDPVVDPIAAILGPKGERIRGISEEFNGEIIDIVIWNEDKLKFLVNAVLPAEVVGYNILQDDERDTSIEIVVPANQIANVFGFKGINIRLISNLTGWSSVDVYTEKDAAEQGIEFTRVNFQPQGIFGIKKRRDKISNNPRNNNQQLASDKVFYTSKANVVDDEIIVDLAKQAEAKRVKQIKQEATKPELQLQQELNLEATPKVAAPTPTPAPQPTPAPTKVEPVPPPVSVTPKPIPKVNKPKPVVKPKSVFSITVEADDSKTKPEKSSAKTNTPQTKQTFDNFDDL.

Residues 144-214 (GQVIEARVED…SMWPITLSRS (71 aa)) enclose the S1 motif domain. The KH domain maps to 319–386 (DTSIEIVVPA…QGIFGIKKRR (68 aa)). The segment at 457–540 (VAAPTPTPAP…KQTFDNFDDL (84 aa)) is disordered. Pro residues predominate over residues 461 to 489 (TPTPAPQPTPAPTKVEPVPPPVSVTPKPI). Over residues 512 to 522 (DDSKTKPEKSS) the composition is skewed to basic and acidic residues. Over residues 523–540 (AKTNTPQTKQTFDNFDDL) the composition is skewed to polar residues.

The protein belongs to the NusA family. In terms of assembly, monomer. Binds directly to the core enzyme of the DNA-dependent RNA polymerase and to nascent RNA.

Its subcellular location is the cytoplasm. Participates in both transcription termination and antitermination. The sequence is that of Transcription termination/antitermination protein NusA from Mycoplasma pneumoniae (strain ATCC 29342 / M129 / Subtype 1) (Mycoplasmoides pneumoniae).